The chain runs to 161 residues: 18.1 kDa class I heat shock protein (161 aa).

One can recognise a sHSP domain in the interval 45-160 (DVAAFTNARV…QVKSIDISGA (116 aa)).

The protein belongs to the small heat shock protein (HSP20) family. As to quaternary structure, may form oligomeric structures. Binds to AKR2A.

Its subcellular location is the cytoplasm. The polypeptide is 18.1 kDa class I heat shock protein (HSP18.1) (Arabidopsis thaliana (Mouse-ear cress)).